Here is a 544-residue protein sequence, read N- to C-terminus: Involucrin (544 aa).

Residues 1-520 (MSQQHTLPVT…GQVQGIQQAL (520 aa)) are disordered. Positions 76–90 (EQQQQPQEQKLQQQH) are enriched in low complexity. Basic and acidic residues-rich tracts occupy residues 96–117 (EHQK…REKQ), 124–152 (EEEK…KEQL), 202–234 (QLKH…KQSE), 252–271 (QLKH…HQEG), 283–297 (KHLE…HPEQ), 304–347 (QLEE…HPEQ), 354–411 (QLEE…REEQ), 423–437 (KHLE…HPEQ), and 462–476 (KHLE…HPEQ). The segment covering 477 to 494 (QEGQLKPQEQQEGQLKGL) has biased composition (low complexity).

Belongs to the involucrin family. Directly or indirectly cross-linked to cornifelin (CNFN). In terms of processing, substrate of transglutaminase. Specific glutamines or lysines are cross-linked to keratins, desmoplakin and to inter involucrin molecules. Keratinocytes of epidermis and other stratified squamous epithelia.

The protein localises to the cytoplasm. Functionally, part of the insoluble cornified cell envelope (CE) of stratified squamous epithelia. The sequence is that of Involucrin (IVL) from Aotus trivirgatus (Three-striped night monkey).